The primary structure comprises 457 residues: MSAENGSPGLPNGGVCCATDSGRCSLVGNKVTVVLGAQWGDEGKGKVVDLLAQDADIVCRCQGGNNAGHTVVVDSVEYDFHLLPSGIINQNAIAFIGNGVVIHLPGLFEEAEKNLKKGQGLVGWEKRLCISDRAHIVFDFHQAADGIQEQQRQEQAGKNLGTTKKGIGPVYSSKAARSGLRMCDLVSDFSEFSQRFKLLAKQYKSMYPSLEIDIDGELKKLQDYADRVKPMVKDGVYYLYEALHGPPKNILVEGANAALLDIDFGTYPFVTSSNCTVGGVCTGLGIPPQSVGDVYGVVKAYTTRVGIGAFPTEQNNDTGEMLQTRGHEYGVTTGRKRRCGWLDLVLLRYAHMINGFTALALAKLDILDVLSEIKVGVSYKIDGKKIPHFPANQEVLNRVEVEYETLPGWNTDTCNVRTFEELPENAKKYVRYIELELGIPIKWIGVGKSRESMIQLF.

GTP-binding positions include 40–46 (GDEGKGK) and 68–70 (GHT). D41 serves as the catalytic Proton acceptor. Positions 41 and 68 each coordinate Mg(2+). Residue D41 coordinates substrate. Residues 41-44 (DEGK), 66-69 (NAGH), T163, R177, N256, T271, and R335 contribute to the IMP site. H69 serves as the catalytic Proton donor. Residue 331 to 337 (VTTGRKR) coordinates substrate. GTP contacts are provided by residues R337, 363-365 (KLD), and 445-448 (GVGK).

It belongs to the adenylosuccinate synthetase family. In terms of assembly, homodimer. Requires Mg(2+) as cofactor.

The protein localises to the cytoplasm. The protein resides in the mitochondrion. The catalysed reaction is IMP + L-aspartate + GTP = N(6)-(1,2-dicarboxyethyl)-AMP + GDP + phosphate + 2 H(+). Its pathway is purine metabolism; AMP biosynthesis via de novo pathway; AMP from IMP: step 1/2. With respect to regulation, inhibited competitively by AMP and IMP and non-competitively by fructose 1,6-bisphosphate. Functionally, plays an important role in the de novo pathway and in the salvage pathway of purine nucleotide biosynthesis. Catalyzes the first committed step in the biosynthesis of AMP from IMP. This chain is Adenylosuccinate synthetase isozyme 2 B (adss2-b), found in Xenopus tropicalis (Western clawed frog).